The sequence spans 172 residues: Phosphopantetheine adenylyltransferase (172 aa).

Serine 9 contacts substrate. ATP is bound by residues 9-10 and histidine 17; that span reads SF. The substrate site is built by lysine 41, leucine 78, and arginine 92. Residues 93 to 95, glutamate 103, and 128 to 134 contribute to the ATP site; these read GLR and GRAITST.

Belongs to the bacterial CoaD family. In terms of assembly, homohexamer. Requires Mg(2+) as cofactor.

It localises to the cytoplasm. It catalyses the reaction (R)-4'-phosphopantetheine + ATP + H(+) = 3'-dephospho-CoA + diphosphate. The protein operates within cofactor biosynthesis; coenzyme A biosynthesis; CoA from (R)-pantothenate: step 4/5. Reversibly transfers an adenylyl group from ATP to 4'-phosphopantetheine, yielding dephospho-CoA (dPCoA) and pyrophosphate. The sequence is that of Phosphopantetheine adenylyltransferase from Bartonella quintana (strain Toulouse) (Rochalimaea quintana).